A 378-amino-acid polypeptide reads, in one-letter code: Beta-1,3-galactosyltransferase 4 (378 aa).

The Cytoplasmic portion of the chain corresponds to 1–8 (MQLRLFRR). A helical; Signal-anchor for type II membrane protein membrane pass occupies residues 9–19 (LLLAALLLVIV). Residues 20 to 378 (WTLFGPSGLG…RCRAIAWLQS (359 aa)) are Lumenal-facing. N-linked (GlcNAc...) asparagine glycosylation occurs at N149.

The protein belongs to the glycosyltransferase 31 family. In terms of tissue distribution, highly expressed in heart, skeletal muscle and pancreas and, to a lesser extent, in brain, placenta, kidney, liver and lung.

The protein localises to the golgi apparatus membrane. It carries out the reaction a ganglioside GM2 (d18:1(4E)) + UDP-alpha-D-galactose = a ganglioside GM1 (d18:1(4E)) + UDP + H(+). It catalyses the reaction a ganglioside GM2 + UDP-alpha-D-galactose = a ganglioside GM1 + UDP + H(+). The catalysed reaction is a ganglioside GD2 (d18:1(4E)) + UDP-alpha-D-galactose = a ganglioside GD1b (d18:1(4E)) + UDP + H(+). The enzyme catalyses a ganglioside GA2 (d18:1(4E)) + UDP-alpha-D-galactose = a ganglioside GA1 (d18:1(4E)) + UDP + H(+). It participates in protein modification; protein glycosylation. Involved in GM1/GD1B/GA1 ganglioside biosynthesis. The polypeptide is Beta-1,3-galactosyltransferase 4 (Homo sapiens (Human)).